The primary structure comprises 321 residues: Polyprenyl transferase cle5 (321 aa).

The next 9 membrane-spanning stretches (helical) occupy residues 26 to 46, 57 to 77, 107 to 127, 132 to 149, 159 to 179, 189 to 209, 232 to 252, 262 to 282, and 300 to 320; these read PLLATFSGVWATILAGSHKIT, VLSQALLCFICSFVFCGAGMV, EALVWMAFQFISSWVLVSWML, VQAAMLPVTLSTILYPFA, IYPQYLLGFTLAYPSLIGTLA, LWASINQSLPMFVTVFTWTLY, VLAGSYIHHLLVVLAVLVLGA, SQWLWGGWMGVWTWSFLGQLV, and FALGVWTVFVCVVELLIGGNG.

This sequence belongs to the UbiA prenyltransferase family. Mg(2+) is required as a cofactor.

It localises to the membrane. The protein operates within secondary metabolite biosynthesis; terpenoid biosynthesis. Functionally, polyprenyl transferase; part of the cluster A that mediates the biosynthesis of chevalone E and its oxidized derivatives that possess a unique five-membered lactone ring and can synergistically enhance the cytotoxicity of doxorubicin (DOX) in breast cancer cells. Within the pathway, cle5 takes part to the biosynthesis of the molecular scaffold by catalyzing the C-3 geranylgeranylation reaction of triacetic acid lactone (TAL) produced by cle1. The molecular scaffold is commonly biosynthesized by a series of enzymes including the non-reducing polyketide synthase (NR-PKS) cle1 that produces the alpha-pyrone triacetic acid lactone (TAL); The membrane-bound prenyltransferase cle5 that accepts TAL as its substrate to perform a C-3 geranylgeranylation reaction, in which the pathway-dedicated GGPS cle6 is required to provide GGPP, the other substrate of cle5; the FAD-dependent monooxygenase Cle3 that forms an (S)-epoxide ring at the terminal olefin of the geranylgeranyl group; and the terpene cyclase Cle7 that catalyzes the cyclization of the prenyl group that yields the pentacyclic pathway intermediate chevalone E. Chevalone E can derivatize into seven new oxidized analogs by the cytochrome P450 monooxygenases cle2 (acting at C-20) and cle4 (acting at C-11 and C-12). This chain is Polyprenyl transferase cle5, found in Aspergillus versicolor.